A 224-amino-acid chain; its full sequence is Ribose-5-phosphate isomerase A (224 aa).

Substrate contacts are provided by residues 26-29 (TGST), 81-84 (DGAD), and 94-97 (KGGG). Residue Glu-103 is the Proton acceptor of the active site. Lys-121 contacts substrate.

The protein belongs to the ribose 5-phosphate isomerase family. Homodimer.

The enzyme catalyses aldehydo-D-ribose 5-phosphate = D-ribulose 5-phosphate. Its pathway is carbohydrate degradation; pentose phosphate pathway; D-ribose 5-phosphate from D-ribulose 5-phosphate (non-oxidative stage): step 1/1. In terms of biological role, catalyzes the reversible conversion of ribose-5-phosphate to ribulose 5-phosphate. This is Ribose-5-phosphate isomerase A from Listeria monocytogenes serovar 1/2a (strain ATCC BAA-679 / EGD-e).